Here is a 485-residue protein sequence, read N- to C-terminus: Pumilio domain-containing protein 6 (485 aa).

2 disordered regions span residues 29 to 48 and 55 to 76; these read NKTHKNKNPKPPVKLLPYRH and SDLDNYIFNSGSGSSDDETPPP. The segment covering 55 to 68 has biased composition (polar residues); sequence SDLDNYIFNSGSGS. 8 Pumilio repeats span residues 86–124, 125–163, 164–200, 201–236, 237–279, 287–324, 326–361, and 372–411; these read EVLLNGLLIDFAIDPSGVKFLEANYPLDSEDQIRKAVFE, KLTESTTLFVGLCHSRNGNFIVQKLVELATPAEQRELLR, QMIDGGLLVMCKDKFACRVVQLALQKFDHSNVFQLIQ, ELSTFDLAAMCTDQISIHVIQRVVKQLPVDMWTFFV, HFLS…FRIQ, CIVRNCYRLSSNEFANYVIQYVIKSSGIMEMYRDTIID, CLLRNLLSMSQDKYASHVIEGAFLFAPPALLHEMME, and ELNRDALDILLFHQYGNYVVQQMISICTAALIGKEERQLP. The RNA-binding stretch occupies residues 439-454; that stretch reads FSSGKKIIDSVMRHGV.

Functionally, RNA-binding protein that binds to the consensus sequence 5'-CUCUGUAUCUUGU-3' in mRNA 3'-UTRs and modulates mRNA expression and stability. Functions redundantly with puf-5 and puf-7 in oocyte formation and organization, early embryonic cell divisions, and repression of expression of glp-1 and other maternal mRNAs in late oogenesis. The sequence is that of Pumilio domain-containing protein 6 from Caenorhabditis elegans.